Here is a 254-residue protein sequence, read N- to C-terminus: 3-deoxy-manno-octulosonate cytidylyltransferase (254 aa).

The protein belongs to the KdsB family.

The protein localises to the cytoplasm. It catalyses the reaction 3-deoxy-alpha-D-manno-oct-2-ulosonate + CTP = CMP-3-deoxy-beta-D-manno-octulosonate + diphosphate. Its pathway is nucleotide-sugar biosynthesis; CMP-3-deoxy-D-manno-octulosonate biosynthesis; CMP-3-deoxy-D-manno-octulosonate from 3-deoxy-D-manno-octulosonate and CTP: step 1/1. It functions in the pathway bacterial outer membrane biogenesis; lipopolysaccharide biosynthesis. Activates KDO (a required 8-carbon sugar) for incorporation into bacterial lipopolysaccharide in Gram-negative bacteria. This chain is 3-deoxy-manno-octulosonate cytidylyltransferase, found in Haemophilus influenzae (strain PittEE).